Here is a 677-residue protein sequence, read N- to C-terminus: WD repeat-containing protein 48 (677 aa).

At Tyr28 the chain carries Phosphotyrosine. 8 WD repeats span residues 28–67 (YNRN…QDPY), 73–112 (HHTD…CMST), 115–154 (THKD…ALTA), 166–205 (GNKD…KLMK), 208–247 (GHTD…CIAT), 250–289 (VHDE…IRVL), 292–334 (EEKA…NFRA), and 358–452 (KGGA…GFSS). At Lys214 the chain carries N6-acetyllysine. At Lys578 the chain carries N6-acetyllysine. The disordered stretch occupies residues 607–628 (LDNESQTTSSSNNEKPGEQEKE). The segment covering 609 to 620 (NESQTTSSSNNE) has biased composition (low complexity). At Thr613 the chain carries Phosphothreonine.

It belongs to the WD repeat WDR48 family. As to quaternary structure, interacts with USP46. Interacts with USP1. Interacts with USP12. Component of the USP12-WDR20-WDR48 deubiquitinating complex. Component of the USP12-DMWD-WDR48 deubiquitinating complex. Interacts with PHLPP1. Interacts with RAD51AP1; the interaction is direct and promotes formation of a trimeric complex with RAD51 via RAD51AP1. Interacts with ATAD5; the interaction regulates USP1-mediated PCNA deubiquitination. Interacts with RAD51; the interaction is enhanced under replication stress. Interacts with ITCH; the interaction is more efficient when both USP12 and WDR48/UAF1 are involved and may facilitate recruitment of the USP12 deubiquitinating complex to Notch.

Its subcellular location is the nucleus. It is found in the cytoplasm. The protein resides in the lysosome. It localises to the late endosome. Regulator of deubiquitinating complexes, which acts as a strong activator of USP1, USP12 and USP46. Enhances the USP1-mediated deubiquitination of FANCD2; USP1 being almost inactive by itself. Activates deubiquitination by increasing the catalytic turnover without increasing the affinity of deubiquitinating enzymes for the substrate. Also activates deubiquitinating activity of complexes containing USP12. Docks at the distal end of the USP12 fingers domain and induces a cascade of structural changes leading to the activation of the enzyme. Together with RAD51AP1, promotes DNA repair by stimulating RAD51-mediated homologous recombination. Binds single-stranded DNA (ssDNA) and double-stranded DNA (dsDNA). DNA-binding is required both for USP1-mediated deubiquitination of FANCD2 and stimulation of RAD51-mediated homologous recombination: both WDR48/UAF1 and RAD51AP1 have coordinated role in DNA-binding during these processes. Together with ATAD5 and by regulating USP1 activity, has a role in PCNA-mediated translesion synthesis (TLS) by deubiquitinating monoubiquitinated PCNA. Together with ATAD5, has a role in recruiting RAD51 to stalled forks during replication stress. This chain is WD repeat-containing protein 48 (WDR48), found in Pongo abelii (Sumatran orangutan).